The following is a 237-amino-acid chain: Carbohydrate deacetylase (237 aa).

Residues His59 and His125 each coordinate Mg(2+).

This sequence belongs to the YdjC deacetylase family. The cofactor is Mg(2+).

Probably catalyzes the deacetylation of acetylated carbohydrates an important step in the degradation of oligosaccharides. In Halalkalibacterium halodurans (strain ATCC BAA-125 / DSM 18197 / FERM 7344 / JCM 9153 / C-125) (Bacillus halodurans), this protein is Carbohydrate deacetylase.